The following is a 322-amino-acid chain: Replication factor C small subunit (322 aa).

46–53 serves as a coordination point for ATP; sequence GSAGVGKT.

This sequence belongs to the activator 1 small subunits family. RfcS subfamily. As to quaternary structure, heteromultimer composed of small subunits (RfcS) and large subunits (RfcL).

Functionally, part of the RFC clamp loader complex which loads the PCNA sliding clamp onto DNA. This Methanoregula boonei (strain DSM 21154 / JCM 14090 / 6A8) protein is Replication factor C small subunit.